Consider the following 805-residue polypeptide: MSFNHREIEQKWQDYWEKNKTFRTPDDDDKPKFYVLDMFPYPSGAGLHVGHPEGYTATDILARMKRMQGYNVLHPMGWDAFGLPAEQYALDTGNDPAEFTQKNIDNFRRQIKSLGFSYDWDREINTTDPNYYKWTQWIFLKLYEKGLAYMDEVPVNWCPALGTVLANEEVINGRSERGGHPVIRKPMRQWMLKITAYADRLLEDLEELDWPESIKEMQRNWIGRSEGAEIEFAVHGHDETFTVFTTRPDTLFGATYTVLAPEHPLVEKITTPEQKPAVDAYLKEIQSKSDLERTDLAKEKTGVFTGAYAIHPVTGDRLPIWIADYVLMSYGTGAIMAVPAHDERDYEFAKKFHLPMKEVVAGGDIEKEPYTGDGEHINSEFLNGLNKQEAIDKMIAWLEEHGKGRKKVSYRLRDWLFSRQRYWGEPIPIIHWEDGTMTPVPEEELPLVLPKTDEIRPSGTGESPLANIEEWVNVVDPKTGKKGRRETNTMPQWAGSCWYYLRYIDPHNDKQLADPEKLKKWLPVDVYIGGAEHAVLHLLYARFWHKFLYDLGIVPTKEPFQKLFNQGMILGENNEKMSKSKGNVVNPDDIIESHGADTLRLYEMFMGPLEASIAWSTKGLDGARRFLDRVWRLFVTENGELNPNIVDEPANDTLERIYHQTVKKVTEDYESLRFNTAISQLMVFINEAYKAEQMKKEYMEGFVKLLSPVCPHIGEELWQKLGHTDTIAYEPWPTYDETKLVEDVVEIVVQINGKVRSRLHVPVDLPKEALEERALADEKIKEQLEGKTVRKVIAVPGKLVNIVAN.

A 'HIGH' region motif is present at residues 40 to 51; it reads PYPSGAGLHVGH. Residues 576 to 580 carry the 'KMSKS' region motif; that stretch reads KMSKS. Lysine 579 is a binding site for ATP.

It belongs to the class-I aminoacyl-tRNA synthetase family.

The protein resides in the cytoplasm. The catalysed reaction is tRNA(Leu) + L-leucine + ATP = L-leucyl-tRNA(Leu) + AMP + diphosphate. In Geobacillus kaustophilus (strain HTA426), this protein is Leucine--tRNA ligase.